A 397-amino-acid polypeptide reads, in one-letter code: Lysophospholipid transporter LplT (397 aa).

Topologically, residues 1 to 17 are periplasmic; the sequence is MSESVHTNTSLWSKGMK. A helical transmembrane segment spans residues 18–38; it reads AVIVAQFLSAFGDNALLFATL. At 39 to 52 the chain is on the cytoplasmic side; sequence ALLKAQFYPEWSQP. A helical membrane pass occupies residues 53–73; sequence ILQMVFVGAYILFAPFVGQVA. The Periplasmic portion of the chain corresponds to 74-90; that stretch reads DSFAKGRVMMFANGLKL. A helical membrane pass occupies residues 91-111; the sequence is LGAASICFGINPFLGYTLVGV. Residues 112–144 are Cytoplasmic-facing; the sequence is GAAAYSPAKYGILGELTTGSKLVKANGLMEAST. A helical transmembrane segment spans residues 145–165; the sequence is IAAILLGSVAGGVLADWHVLV. A166 is a topological domain (periplasmic). Residues 167-187 traverse the membrane as a helical segment; sequence LAACALAYGGAVVANIYIPKL. The Cytoplasmic portion of the chain corresponds to 188 to 226; that stretch reads AAARPGQSWNLINMTRSFLNACTSLWRNGETRFSLVGTS. Residues 227–247 traverse the membrane as a helical segment; the sequence is LFWGAGVTLRFLLVLWVPVAL. Residues 248-256 lie on the Periplasmic side of the membrane; that stretch reads GITDNATPT. The helical transmembrane segment at 257 to 277 threads the bilayer; the sequence is YLNAMVAIGIVVGAGAAAKLV. At 278–280 the chain is on the cytoplasmic side; it reads TLE. A helical membrane pass occupies residues 281–301; the sequence is TVSRCMPAGILIGVVVLIFSL. Residues 302–304 lie on the Periplasmic side of the membrane; it reads QHE. Residues 305 to 325 form a helical membrane-spanning segment; that stretch reads LLPAYALLMLIGVLGGFFVVP. At 326-343 the chain is on the cytoplasmic side; sequence LNALLQERGKKSVGAGNA. Residues 344 to 364 traverse the membrane as a helical segment; it reads IAVQNLGENSAMLLMLGIYSL. Topologically, residues 365-366 are periplasmic; sequence AV. A helical membrane pass occupies residues 367–387; it reads MVGIPVVPIGIGFGALFALAI. The Cytoplasmic segment spans residues 388 to 397; it reads TALWIWQRRH.

The protein belongs to the major facilitator superfamily. LplT (TC 2.A.1.42) family.

It is found in the cell inner membrane. In terms of biological role, catalyzes the facilitated diffusion of 2-acyl-glycero-3-phosphoethanolamine (2-acyl-GPE) into the cell. This is Lysophospholipid transporter LplT from Escherichia coli (strain SMS-3-5 / SECEC).